The sequence spans 182 residues: Large ribosomal subunit protein uL10 (182 aa).

Belongs to the universal ribosomal protein uL10 family. Part of the ribosomal stalk of the 50S ribosomal subunit. The N-terminus interacts with L11 and the large rRNA to form the base of the stalk. The C-terminus forms an elongated spine to which L12 dimers bind in a sequential fashion forming a multimeric L10(L12)X complex.

In terms of biological role, forms part of the ribosomal stalk, playing a central role in the interaction of the ribosome with GTP-bound translation factors. The polypeptide is Large ribosomal subunit protein uL10 (Parafrankia sp. (strain EAN1pec)).